Consider the following 98-residue polypeptide: MASLLCCGPKLAACGIVLSAWGVIMLIMLGIFFNVHSAVLIEDVPFTEKDFENGPQNIYNLYEQVSYNCFIAAGLYLLLGGFSFCQVRLNKRKEYMVR.

2 helical membrane-spanning segments follow: residues 13–33 (ACGI…GIFF) and 65–85 (VSYN…FSFC).

It belongs to the RNase K family. As to quaternary structure, interacts with the proton translocation complex V0 of the V-ATPase. Interacts with ATP6AP1.

The protein localises to the endomembrane system. The protein resides in the cytoplasmic vesicle. It is found in the clathrin-coated vesicle membrane. Functionally, endoribonuclease which preferentially cleaves ApU and ApG phosphodiester bonds. Hydrolyzes UpU bonds at a lower rate. Regulates the activity of vacuolar (H+)-ATPase (V-ATPase) which is responsible for acidifying and maintaining the pH of intracellular compartments. Required at an early stage of receptor-mediated endocytosis. This Mus musculus (Mouse) protein is Ribonuclease kappa (Rnasek).